We begin with the raw amino-acid sequence, 1397 residues long: DNA-directed RNA polymerase subunit beta' (1397 aa).

Zn(2+)-binding residues include Cys-75, Cys-77, Cys-90, and Cys-93. Positions 465, 467, and 469 each coordinate Mg(2+). Residues Cys-819, Cys-893, Cys-900, and Cys-903 each contribute to the Zn(2+) site.

This sequence belongs to the RNA polymerase beta' chain family. As to quaternary structure, the RNAP catalytic core consists of 2 alpha, 1 beta, 1 beta' and 1 omega subunit. When a sigma factor is associated with the core the holoenzyme is formed, which can initiate transcription. The cofactor is Mg(2+). Requires Zn(2+) as cofactor.

It catalyses the reaction RNA(n) + a ribonucleoside 5'-triphosphate = RNA(n+1) + diphosphate. Functionally, DNA-dependent RNA polymerase catalyzes the transcription of DNA into RNA using the four ribonucleoside triphosphates as substrates. This Acinetobacter baylyi (strain ATCC 33305 / BD413 / ADP1) protein is DNA-directed RNA polymerase subunit beta'.